We begin with the raw amino-acid sequence, 332 residues long: Biotin synthase (332 aa).

The Radical SAM core domain occupies Arg51–Arg278. Residues Cys66, Cys70, and Cys73 each contribute to the [4Fe-4S] cluster site. [2Fe-2S] cluster-binding residues include Cys110, Cys141, Cys201, and Arg273.

It belongs to the radical SAM superfamily. Biotin synthase family. As to quaternary structure, homodimer. Requires [4Fe-4S] cluster as cofactor. It depends on [2Fe-2S] cluster as a cofactor.

It catalyses the reaction (4R,5S)-dethiobiotin + (sulfur carrier)-SH + 2 reduced [2Fe-2S]-[ferredoxin] + 2 S-adenosyl-L-methionine = (sulfur carrier)-H + biotin + 2 5'-deoxyadenosine + 2 L-methionine + 2 oxidized [2Fe-2S]-[ferredoxin]. The protein operates within cofactor biosynthesis; biotin biosynthesis; biotin from 7,8-diaminononanoate: step 2/2. Functionally, catalyzes the conversion of dethiobiotin (DTB) to biotin by the insertion of a sulfur atom into dethiobiotin via a radical-based mechanism. The chain is Biotin synthase from Haemophilus influenzae (strain PittGG).